Here is a 455-residue protein sequence, read N- to C-terminus: Bifunctional protein GlmU (455 aa).

Residues 1–225 (MNIVILAAGM…EWETLGVNSK (225 aa)) are pyrophosphorylase. Residues 6-9 (LAAG), lysine 20, glutamine 71, 76-77 (GT), 98-100 (YGD), glycine 135, glutamate 150, asparagine 165, and asparagine 223 each bind UDP-N-acetyl-alpha-D-glucosamine. Aspartate 100 provides a ligand contact to Mg(2+). Asparagine 223 serves as a coordination point for Mg(2+). The interval 226–246 (VQLAELERIHQRNLAQQLLED) is linker. An N-acetyltransferase region spans residues 247-455 (GVTLIDPARI…QRPVKQKKEG (209 aa)). 2 residues coordinate UDP-N-acetyl-alpha-D-glucosamine: arginine 329 and lysine 347. Catalysis depends on histidine 359, which acts as the Proton acceptor. Residues tyrosine 362 and asparagine 373 each coordinate UDP-N-acetyl-alpha-D-glucosamine. Acetyl-CoA-binding positions include alanine 376, 382–383 (NY), serine 401, alanine 419, and arginine 436.

It in the N-terminal section; belongs to the N-acetylglucosamine-1-phosphate uridyltransferase family. This sequence in the C-terminal section; belongs to the transferase hexapeptide repeat family. In terms of assembly, homotrimer. The cofactor is Mg(2+).

The protein localises to the cytoplasm. It catalyses the reaction alpha-D-glucosamine 1-phosphate + acetyl-CoA = N-acetyl-alpha-D-glucosamine 1-phosphate + CoA + H(+). It carries out the reaction N-acetyl-alpha-D-glucosamine 1-phosphate + UTP + H(+) = UDP-N-acetyl-alpha-D-glucosamine + diphosphate. It participates in nucleotide-sugar biosynthesis; UDP-N-acetyl-alpha-D-glucosamine biosynthesis; N-acetyl-alpha-D-glucosamine 1-phosphate from alpha-D-glucosamine 6-phosphate (route II): step 2/2. The protein operates within nucleotide-sugar biosynthesis; UDP-N-acetyl-alpha-D-glucosamine biosynthesis; UDP-N-acetyl-alpha-D-glucosamine from N-acetyl-alpha-D-glucosamine 1-phosphate: step 1/1. Its pathway is bacterial outer membrane biogenesis; LPS lipid A biosynthesis. Its function is as follows. Catalyzes the last two sequential reactions in the de novo biosynthetic pathway for UDP-N-acetylglucosamine (UDP-GlcNAc). The C-terminal domain catalyzes the transfer of acetyl group from acetyl coenzyme A to glucosamine-1-phosphate (GlcN-1-P) to produce N-acetylglucosamine-1-phosphate (GlcNAc-1-P), which is converted into UDP-GlcNAc by the transfer of uridine 5-monophosphate (from uridine 5-triphosphate), a reaction catalyzed by the N-terminal domain. This is Bifunctional protein GlmU from Ralstonia pickettii (strain 12J).